The sequence spans 325 residues: Beta-ketoacyl-[acyl-carrier-protein] synthase III (325 aa).

Residues Cys-112 and His-250 contribute to the active site. The segment at 251 to 255 (QANIR) is ACP-binding. The active site involves Asn-280.

It belongs to the thiolase-like superfamily. FabH family. Homodimer.

Its subcellular location is the cytoplasm. It carries out the reaction malonyl-[ACP] + acetyl-CoA + H(+) = 3-oxobutanoyl-[ACP] + CO2 + CoA. Its pathway is lipid metabolism; fatty acid biosynthesis. In terms of biological role, catalyzes the condensation reaction of fatty acid synthesis by the addition to an acyl acceptor of two carbons from malonyl-ACP. Catalyzes the first condensation reaction which initiates fatty acid synthesis and may therefore play a role in governing the total rate of fatty acid production. Possesses both acetoacetyl-ACP synthase and acetyl transacylase activities. Its substrate specificity determines the biosynthesis of branched-chain and/or straight-chain of fatty acids. The chain is Beta-ketoacyl-[acyl-carrier-protein] synthase III from Streptococcus mutans serotype c (strain ATCC 700610 / UA159).